We begin with the raw amino-acid sequence, 123 residues long: MPPKVASKGAKKAASKAKAARSGEKKKKRRRRESYSIYIYKVLKQVHPDTGISSKAMSIMNSFVNDIFERIAAEASRLAHYNKRSTITSREIQTAVRLLLPGELAKHAVSEGTKAVTKYTSSK.

The segment at 1–31 (MPPKVASKGAKKAASKAKAARSGEKKKKRRR) is disordered. Positions 9-31 (GAKKAASKAKAARSGEKKKKRRR) are enriched in basic residues. Residue Ser110 is glycosylated (O-linked (GlcNAc) serine). A Glycyl lysine isopeptide (Lys-Gly) (interchain with G-Cter in ubiquitin) cross-link involves residue Lys118.

Belongs to the histone H2B family. In terms of assembly, the nucleosome is a histone octamer containing two molecules each of H2A, H2B, H3 and H4 assembled in one H3-H4 heterotetramer and two H2A-H2B heterodimers. The octamer wraps approximately 147 bp of DNA. Post-translationally, monoubiquitination of Lys-118 gives a specific tag for epigenetic transcriptional activation and is also prerequisite for histone H3 'Lys-4' and 'Lys-79' methylation. In terms of processing, glcNAcylation at Ser-110 promotes monoubiquitination of Lys-118. It fluctuates in response to extracellular glucose, and associates with transcribed genes.

It localises to the nucleus. Its subcellular location is the chromosome. Functionally, core component of nucleosome. Nucleosomes wrap and compact DNA into chromatin, limiting DNA accessibility to the cellular machineries which require DNA as a template. Histones thereby play a central role in transcription regulation, DNA repair, DNA replication and chromosomal stability. DNA accessibility is regulated via a complex set of post-translational modifications of histones, also called histone code, and nucleosome remodeling. The chain is Histone H2B from Platynereis dumerilii (Dumeril's clam worm).